Reading from the N-terminus, the 697-residue chain is MPRQFSLENTRNIGIMAHIDAGKTTTTERILFYTGRVHKIGETHEGSATMDWMEQEQERGITITSAATTAQWKGTRINIIDTPGHVDFTVEVERSLRVLDGAVAVFCAKGGVEPQSETVWRQADKYKVPRMAYVNKMDIMGADFFNCIKMMKERLQANPVPIQLPIGKEDNFQGIIDLIEMKAYYYMDDLGKVIEQRDIPEDMRELAEEYRTNLLENVAEYDEELMMKYLEGEEITEAEIKAALRKGTIAVKAIPVLCGSSYKNKGVQRLLDAIVDYMPSPVDIEAIKGVSVDGETEIERHASDDEPFSALAFKIMSDPYVGKLCFFRVYSGKLSSGSYVLNATKGKRERIGRLLMMHANHREEVDMVYAGDIAAAVGLKETTTGDTLCDEANPVILESMNFPEPVIHVAIEPKTKAGQEKMALALQKLAEEDPTFRTYTDQETGQTIIAGMGELHLEIIVDRLLREFKVEANVGNPQVAYKETIRKSVKSEGKYIRQSGGKGQYGHCWIEIEPKERGTGYEFVNKIVGGVIPKEYIPAVDAGIQSAMNNGVLAGYPVVDVKVTLYDGSYHEVDSSEMAFKVAASMAFKEGMKKADPVILEPIMKVVVTVPEDYMGDVIGDLNSRRGRIEGMEARAGAQVIHAYVPLAEMFGYATALRSRSQGRGVFSMEISHFEEVPKNIQEQIISGRAKNNSSDE.

Positions Glu-8–Val-282 constitute a tr-type G domain. Residues Ala-17–Thr-24, Asp-81–His-85, and Asn-135–Asp-138 contribute to the GTP site.

It belongs to the TRAFAC class translation factor GTPase superfamily. Classic translation factor GTPase family. EF-G/EF-2 subfamily.

The protein localises to the cytoplasm. Catalyzes the GTP-dependent ribosomal translocation step during translation elongation. During this step, the ribosome changes from the pre-translocational (PRE) to the post-translocational (POST) state as the newly formed A-site-bound peptidyl-tRNA and P-site-bound deacylated tRNA move to the P and E sites, respectively. Catalyzes the coordinated movement of the two tRNA molecules, the mRNA and conformational changes in the ribosome. In Acetivibrio thermocellus (strain ATCC 27405 / DSM 1237 / JCM 9322 / NBRC 103400 / NCIMB 10682 / NRRL B-4536 / VPI 7372) (Clostridium thermocellum), this protein is Elongation factor G.